The primary structure comprises 234 residues: Adenylate dimethylallyltransferase (234 aa).

It belongs to the isopentenyl transferase family.

The enzyme catalyses dimethylallyl diphosphate + AMP = N(6)-(dimethylallyl)adenosine 5'-phosphate + diphosphate. In terms of biological role, transfers dimethylallyl groups to AMP as part of the biosynthesis of cytokinin phytohormones. This Pseudomonas savastanoi (Pseudomonas syringae pv. savastanoi) protein is Adenylate dimethylallyltransferase (ptz).